The sequence spans 501 residues: Archaemetzincin-1 (501 aa).

His-261 provides a ligand contact to Zn(2+). The Proton acceptor role is filled by Glu-262. 5 residues coordinate Zn(2+): His-265, Cys-272, Cys-277, Cys-296, and Cys-299. The disordered stretch occupies residues 349–370 (DSGMGCESDTEPVTSPSEPVTP).

Belongs to the peptidase M54 family. Requires Zn(2+) as cofactor.

Functionally, probable zinc metalloprotease. The protein is Archaemetzincin-1 (Amz1) of Rattus norvegicus (Rat).